The primary structure comprises 67 residues: Conotoxin reg3.8 (67 aa).

Residues 1 to 22 form the signal peptide; that stretch reads MMSKLGVLLTICLLLFPLSVLP. A propeptide spanning residues 23–50 is cleaved from the precursor; the sequence is LDGDQLADQPARHAQSAERNARFHPVKR. Intrachain disulfides connect C51–C65, C52–C63, and C57–C66. C66 bears the Cysteine amide mark.

The protein belongs to the conotoxin M superfamily. In terms of tissue distribution, expressed by the venom duct.

It is found in the secreted. This chain is Conotoxin reg3.8, found in Conus regius (Crown cone).